Here is a 269-residue protein sequence, read N- to C-terminus: Holocytochrome-c synthase (269 aa).

The segment at 1-72 (MGWFWADQKT…ASKQPGQKMD (72 aa)) is disordered. 2 HRM repeats span residues 25-30 (GCPVMH) and 41-46 (ECPVMQ).

This sequence belongs to the cytochrome c-type heme lyase family.

It localises to the mitochondrion inner membrane. It is found in the mitochondrion intermembrane space. The catalysed reaction is holo-[cytochrome c] = apo-[cytochrome c] + heme b. Functionally, lyase that catalyzes the covalent linking of the heme group to the cytochrome C apoprotein to produce the mature functional cytochrome. The polypeptide is Holocytochrome-c synthase (CYC3) (Saccharomyces cerevisiae (strain ATCC 204508 / S288c) (Baker's yeast)).